The chain runs to 308 residues: Ribosomal RNA small subunit methyltransferase H (308 aa).

S-adenosyl-L-methionine is bound by residues 32–34 (AGH), Asp-52, Phe-79, Asp-100, and Gln-107.

It belongs to the methyltransferase superfamily. RsmH family.

The protein resides in the cytoplasm. The enzyme catalyses cytidine(1402) in 16S rRNA + S-adenosyl-L-methionine = N(4)-methylcytidine(1402) in 16S rRNA + S-adenosyl-L-homocysteine + H(+). Its function is as follows. Specifically methylates the N4 position of cytidine in position 1402 (C1402) of 16S rRNA. The protein is Ribosomal RNA small subunit methyltransferase H of Mycoplasma mycoides subsp. mycoides SC (strain CCUG 32753 / NCTC 10114 / PG1).